The chain runs to 239 residues: MAAVPSAVHLPRCVVSPTGRHSASLIFLHGSGHSGQGQREWIKHVLNQDLTFQHIKIIYPTAPSRPYTPLKGGLSNVWFDRFKISMDCPEHLESIDSMCQVLSGLIDEEVKTGIQKSRILIGGFSMGGCMAMHLAYRSHPDVAGVFVLSGFLNKASVVYQDLQQGGRMLPELFQCHGSADNLVLHAWGKETNSKLKSLGVSTTFHSLPNLNHELNKTELEKLKSWILTRLPGETDGQSE.

N-acetylalanine is present on Ala2. Catalysis depends on charge relay system residues Ser125, Asp180, and His212.

This sequence belongs to the AB hydrolase superfamily. AB hydrolase 2 family.

Its subcellular location is the cytoplasm. It is found in the cytosol. It carries out the reaction S-hexadecanoyl-L-cysteinyl-[protein] + H2O = L-cysteinyl-[protein] + hexadecanoate + H(+). Functionally, palmitoyl thioesterase that catalyzes depalmitoylation of CGAS and KCNMA1. Acts as a regulator of innate immunity by mediating depalmitoylation of CGAS, thereby preventing CGAS homodimerization and cyclic GMP-AMP synthase activity. Does not exhibit phospholipase nor triacylglycerol lipase activity, able to hydrolyze only short chain substrates due to its shallow active site. This is Lysophospholipase-like protein 1 from Mus musculus (Mouse).